The primary structure comprises 139 residues: uncharacterized protein (139 aa).

This is an uncharacterized protein from Saccharomyces cerevisiae (strain ATCC 204508 / S288c) (Baker's yeast).